A 456-amino-acid chain; its full sequence is Probable glycine dehydrogenase (decarboxylating) subunit 1 (456 aa).

This sequence belongs to the GcvP family. N-terminal subunit subfamily. In terms of assembly, the glycine cleavage system is composed of four proteins: P, T, L and H. In this organism, the P 'protein' is a heterodimer of two subunits.

The enzyme catalyses N(6)-[(R)-lipoyl]-L-lysyl-[glycine-cleavage complex H protein] + glycine + H(+) = N(6)-[(R)-S(8)-aminomethyldihydrolipoyl]-L-lysyl-[glycine-cleavage complex H protein] + CO2. The glycine cleavage system catalyzes the degradation of glycine. The P protein binds the alpha-amino group of glycine through its pyridoxal phosphate cofactor; CO(2) is released and the remaining methylamine moiety is then transferred to the lipoamide cofactor of the H protein. This Legionella pneumophila (strain Corby) protein is Probable glycine dehydrogenase (decarboxylating) subunit 1.